A 237-amino-acid polypeptide reads, in one-letter code: Ribosomal RNA small subunit methyltransferase G (237 aa).

Residues Gly-78, Phe-83, Ala-129 to Glu-130, and Arg-148 contribute to the S-adenosyl-L-methionine site.

It belongs to the methyltransferase superfamily. RNA methyltransferase RsmG family.

It is found in the cytoplasm. In terms of biological role, specifically methylates the N7 position of a guanine in 16S rRNA. The protein is Ribosomal RNA small subunit methyltransferase G of Streptococcus thermophilus (strain ATCC BAA-491 / LMD-9).